A 271-amino-acid polypeptide reads, in one-letter code: Type III pantothenate kinase (271 aa).

6 to 13 provides a ligand contact to ATP; sequence DVRNTNIV. Residue 109 to 112 coordinates substrate; sequence GADR. Catalysis depends on aspartate 111, which acts as the Proton acceptor. A K(+)-binding site is contributed by aspartate 131. ATP is bound at residue threonine 134. Threonine 186 is a binding site for substrate.

The protein belongs to the type III pantothenate kinase family. Homodimer. Requires NH4(+) as cofactor. The cofactor is K(+).

It is found in the cytoplasm. The enzyme catalyses (R)-pantothenate + ATP = (R)-4'-phosphopantothenate + ADP + H(+). Its pathway is cofactor biosynthesis; coenzyme A biosynthesis; CoA from (R)-pantothenate: step 1/5. Catalyzes the phosphorylation of pantothenate (Pan), the first step in CoA biosynthesis. This Rhodococcus opacus (strain B4) protein is Type III pantothenate kinase.